We begin with the raw amino-acid sequence, 341 residues long: HTH-type transcriptional repressor PurR (341 aa).

In terms of domain architecture, HTH lacI-type spans alanine 2–valine 56. Positions isoleucine 4 to asparagine 23 form a DNA-binding region, H-T-H motif. A DNA-binding region spans residues serine 48–valine 56. Residues tyrosine 73, arginine 190, threonine 192, phenylalanine 221, and aspartate 275 each coordinate hypoxanthine.

Homodimer.

It participates in purine metabolism; purine nucleotide biosynthesis [regulation]. Functionally, is the main repressor of the genes involved in the de novo synthesis of purine nucleotides, regulating purB, purC, purEK, purF, purHD, purL, purMN and guaBA expression. PurR is allosterically activated to bind its cognate DNA by binding the purine corepressors, hypoxanthine or guanine, thereby effecting transcription repression. In Escherichia coli O139:H28 (strain E24377A / ETEC), this protein is HTH-type transcriptional repressor PurR.